Reading from the N-terminus, the 794-residue chain is MTDEKHVYVPPPKDPPSYEEVALHSALNNSAPPNDGEQNETSMEEMEIIEPPSEDSSRFPLLRTKLAAIHEGWESACHSFEIRFASTFHRIPFQFLYLAVIATVIILASYYGYFDGVPAWRSVHHYGEDVLLNYIKGCDISDTRQQVMTLSSIPHLAGTVGDSSLLQMIMNRLYYEKGTIVDFREFYAYLNFPQLVSLSIDGDDSFHPSLIESYQVGGYDGVSIPTPATFGGSPSGFVNAPLVYANRGRIEDFEWLVNSGIYVESSIVLVRANQSDFALATANAEKYNASAILIFEDTYLTSLDNLNQVYPAGPYPSANSLYRGSVANHYYYVGDPLTPGWSAHEETNRISPKDANVLPSIVSIPITFNDGIELLKRLQGHGHLVKDSNWCQDLAPVLSEVWTGSKISSPGLEVNVLQDIEDKQKIINIMAQIDGYESDQILVVGAPRDSWCTGASDSSVGTSLLIDVISTFANMAQDLSWKPRRTIVFASWDARQFNAIGSTEFLEYWKESLEAKAVAYINVDVAVSGDTFTARTVPGLKKVIQRAFDVANEEDEMKAANIITDDFDYTSDLTSFLTFAGIPVVNLAFERNEENPTPMPFLGSCEDTVSWIDTFGSEYWENAARLGKIWSYLILFLANDPVVPYDLEDEINGVGEMLKRIPEIPGANALDLRKINEEFSELLESLIRFEDEIREWKSLMMHNSYTVSVKKHPELEGYNAKLARFERSFLDEAGLPGHEWYKHLIYGPNLRNSHSQLFPSIFDALLYGDVEAAQKEVKRIALALDRAHNEIRFA.

Positions 1–56 (MTDEKHVYVPPPKDPPSYEEVALHSALNNSAPPNDGEQNETSMEEMEIIEPPSEDS) are disordered. Residues 91-111 (IPFQFLYLAVIATVIILASYY) traverse the membrane as a helical segment.

It belongs to the peptidase M28 family. M28B subfamily.

It is found in the membrane. In Schizosaccharomyces pombe (strain 972 / ATCC 24843) (Fission yeast), this protein is Inactive zinc metalloprotease C354.09c.